A 268-amino-acid polypeptide reads, in one-letter code: Indole-3-glycerol phosphate synthase (268 aa).

Belongs to the TrpC family.

The enzyme catalyses 1-(2-carboxyphenylamino)-1-deoxy-D-ribulose 5-phosphate + H(+) = (1S,2R)-1-C-(indol-3-yl)glycerol 3-phosphate + CO2 + H2O. It functions in the pathway amino-acid biosynthesis; L-tryptophan biosynthesis; L-tryptophan from chorismate: step 4/5. This is Indole-3-glycerol phosphate synthase from Acinetobacter baumannii (strain AB0057).